The following is a 184-amino-acid chain: Probable type 3 secretion system regulator AscH (184 aa).

The disordered stretch occupies residues 1–25 (MKIEGSDQLGGEQPQRQPLPPESMA).

Belongs to the YopR family.

It localises to the secreted. In terms of biological role, may be involved in the regulation of the assembly of the type III secretion system (T3SS), also called injectisome, which is used to inject bacterial effector proteins into eukaryotic host cells. May control the polymerization of the needle. This Aeromonas salmonicida subsp. salmonicida protein is Probable type 3 secretion system regulator AscH.